The primary structure comprises 379 residues: Cytochrome b (379 aa).

4 helical membrane-spanning segments follow: residues 33–53 (FGSLLGACLTIQVITGLFLAM), 77–98 (WTIRYLHANGASMFFMCLFIHV), 113–133 (WNIGIMLLFSVMATAFMGYVL), and 178–198 (FFALHFILPFIISALAMIHLL). 2 residues coordinate heme b: H83 and H97. Heme b contacts are provided by H182 and H196. H201 contacts a ubiquinone. A run of 4 helical transmembrane segments spans residues 226–246 (TKDFLGLLLLILLLMTLTLFY), 288–308 (PGGVVALILSILILAIIPFLQ), 320–340 (LSQFLFWILVADLLTLTWIGG), and 347–367 (FISIGQTASILYFSLMVFIMP).

This sequence belongs to the cytochrome b family. As to quaternary structure, the cytochrome bc1 complex contains 11 subunits: 3 respiratory subunits (MT-CYB, CYC1 and UQCRFS1), 2 core proteins (UQCRC1 and UQCRC2) and 6 low-molecular weight proteins (UQCRH/QCR6, UQCRB/QCR7, UQCRQ/QCR8, UQCR10/QCR9, UQCR11/QCR10 and a cleavage product of UQCRFS1). This cytochrome bc1 complex then forms a dimer. Heme b is required as a cofactor.

The protein resides in the mitochondrion inner membrane. Functionally, component of the ubiquinol-cytochrome c reductase complex (complex III or cytochrome b-c1 complex) that is part of the mitochondrial respiratory chain. The b-c1 complex mediates electron transfer from ubiquinol to cytochrome c. Contributes to the generation of a proton gradient across the mitochondrial membrane that is then used for ATP synthesis. This chain is Cytochrome b (MT-CYB), found in Lepilemur ruficaudatus (Red-tailed sportive lemur).